Here is a 176-residue protein sequence, read N- to C-terminus: Ferritin heavy polypeptide-like 17E (176 aa).

Positions 10–159 constitute a Ferritin-like diiron domain; sequence QNYDWQCEDA…GYLTNLRQMG (150 aa). Fe cation-binding residues include Cys-27, Glu-107, and Gln-141.

Belongs to the ferritin family. Expressed in the testes and spermatogonia.

This Mus musculus (Mouse) protein is Ferritin heavy polypeptide-like 17E.